We begin with the raw amino-acid sequence, 737 residues long: DNA polymerase iota (737 aa).

The region spanning 17–231 (IIHLDMDYFY…GDLKRVTGIG (215 aa)) is the UmuC domain. Residue aspartate 21 participates in Mg(2+) binding. Residues tyrosine 26 and arginine 58 each contribute to the a 2'-deoxyribonucleoside 5'-triphosphate site. Aspartate 113 serves as a coordination point for Mg(2+). Glutamate 114 is a catalytic residue. DNA-binding regions lie at residues 212-277 (TYAE…FGRD) and 288-413 (KTIG…SKFQ). 4 disordered regions span residues 443–464 (TSLTSPTAESPTSDECAFRSSP), 482–515 (SPVPMLLDNGSESAATNSDFSDFSETEVEPSPKK), 557–581 (DSEKDFPMSTTPSTSTSAPAPRFRT), and 607–643 (LSSNASSTASSPLPSPMDDSIAMSAPSTTTLPFPSPT). Polar residues predominate over residues 491 to 502 (GSESAATNSDFS). Composition is skewed to low complexity over residues 563–577 (PMSTTPSTSTSAPAP), 607–618 (LSSNASSTASSP), and 632–643 (PSTTTLPFPSPT). Residues 669–686 (VDAEVFKELPVELQTELI) carry the Ubiquitin-binding (UBM) motif.

It belongs to the DNA polymerase type-Y family. Mg(2+) serves as cofactor. It depends on Mn(2+) as a cofactor.

It is found in the nucleus. The enzyme catalyses DNA(n) + a 2'-deoxyribonucleoside 5'-triphosphate = DNA(n+1) + diphosphate. In terms of biological role, error-prone DNA polymerase specifically involved in DNA repair. Plays an important role in translesion synthesis, where the normal high-fidelity DNA polymerases cannot proceed and DNA synthesis stalls. Favors Hoogsteen base-pairing in the active site. Inserts the correct base with higher fidelity opposite an adenosine template. Exhibits low fidelity and efficiency opposite a thymidine template, where it will preferentially insert guanosine. Forms a Schiff base with 5'-deoxyribose phosphate at abasic sites, but may not have lyase activity. The chain is DNA polymerase iota from Drosophila melanogaster (Fruit fly).